We begin with the raw amino-acid sequence, 611 residues long: MRLLLIHSDHIEYEARKKTKVAEEDAVQKDALDEALAVFCAVESVDEENIEDAVRQAADEIVATARQLGTTNIMIYPYAHLSSDLASPGAAVSVLKGIEGALVGTDGFVVKRAPFGWYKAFSLSCKGHPLSELSRTILPGEGAAAPKKEIEHEFFVITPEGDRKNAADYAKEETPFAALIRKELGYPGPEGAEPVHVDLMRAKELVEYEPRADVGNHRWMPRGKLIRDLLSDYVLTQVLDYGGMPVETPVMYDLGDAAIAEHAAKFGERQYRFKSGNRDMMLRFAACFGMFSIMHDMHISPNTLPMKLYELSTYSFRHEQKGEVIGLKRLRAFTMPDMHTLCRDMDGALTAFEEQLAIGWKTGEDLETPLVGVFRCTRDFFEQYELWVKGIVAKSGVPMLIEVLSERTHYWIAKVDLAAIDAQGRPIENPTVQIDVESADRFDIKYYAPDGTEVHPPILHCSPTGSIERVICAMLEGTAAQEVPSFPTWLAPTQVRLVPVAERHICFAEEIDTRLNAAGIRADVDDRDESVNKKIREAGMDWVPYVAVIGDQEAETGRLMVTIRKLSEKKKPFKESMTESELVQAVKLETAGKPFRPLYTPRLLSRKPRFI.

Positions 1–145 are editing domain; sequence MRLLLIHSDH…TILPGEGAAA (145 aa). Residues 195–487 form a catalytic region; it reads VHVDLMRAKE…TAAQEVPSFP (293 aa). Zn(2+) is bound by residues C287, H339, and H460.

The protein belongs to the class-II aminoacyl-tRNA synthetase family. As to quaternary structure, homodimer. Zn(2+) is required as a cofactor.

The protein resides in the cytoplasm. It carries out the reaction tRNA(Thr) + L-threonine + ATP = L-threonyl-tRNA(Thr) + AMP + diphosphate + H(+). Functionally, catalyzes the attachment of threonine to tRNA(Thr) in a two-step reaction: L-threonine is first activated by ATP to form Thr-AMP and then transferred to the acceptor end of tRNA(Thr). Also edits incorrectly charged L-seryl-tRNA(Thr). This Methanoculleus marisnigri (strain ATCC 35101 / DSM 1498 / JR1) protein is Threonine--tRNA ligase.